The sequence spans 114 residues: UPF0145 protein STK_10800 (114 aa).

It belongs to the UPF0145 family.

This is UPF0145 protein STK_10800 from Sulfurisphaera tokodaii (strain DSM 16993 / JCM 10545 / NBRC 100140 / 7) (Sulfolobus tokodaii).